The following is a 522-amino-acid chain: Gypsy retrotransposon integrase-like protein 1 (522 aa).

Residues 135–292 form the Integrase catalytic domain; that stretch reads KVENPWSLVT…TPYFQMFSRN (158 aa). Residue serine 502 is modified to Phosphoserine.

The polypeptide is Gypsy retrotransposon integrase-like protein 1 (GIN1) (Pongo abelii (Sumatran orangutan)).